The following is a 232-amino-acid chain: MSNVDHAEIAKFEALAHRWWDRESEFKPLHDINPLRVNWIDERVSLAGKKVLDVGCGGGILSEAMALRGATVTGIDMGEAPLAVAQLHQLESGVEVEYRQITAEALAEEMPEQFDVITCLEMLEHVPDPSSVIRACYRMVKPGGQVFFSTINRNPKAYLLAIIGAEYILKMLPRGTHDFKKFIRPSELGAWSRVAGLEVKDIIGLTYNPLTKHYKLSSDVDVNYMIQTLREE.

S-adenosyl-L-methionine contacts are provided by R36, G55, D76, and L120.

Belongs to the methyltransferase superfamily. UbiG/COQ3 family.

It catalyses the reaction a 3-demethylubiquinol + S-adenosyl-L-methionine = a ubiquinol + S-adenosyl-L-homocysteine + H(+). It carries out the reaction a 3-(all-trans-polyprenyl)benzene-1,2-diol + S-adenosyl-L-methionine = a 2-methoxy-6-(all-trans-polyprenyl)phenol + S-adenosyl-L-homocysteine + H(+). Its pathway is cofactor biosynthesis; ubiquinone biosynthesis. In terms of biological role, O-methyltransferase that catalyzes the 2 O-methylation steps in the ubiquinone biosynthetic pathway. The protein is Ubiquinone biosynthesis O-methyltransferase of Pseudomonas putida (strain W619).